Consider the following 223-residue polypeptide: Glycerol-3-phosphate acyltransferase (223 aa).

Transmembrane regions (helical) follow at residues 2-22 (LEIL…GLVI), 52-72 (WGVA…WLAF), 78-98 (PVFV…SCFM), 112-132 (IFLP…MLVI), and 153-173 (LAVS…AVVV). A disordered region spans residues 191 to 223 (WLKSKNKGAAAGNAAEGDDTQNMNPQDAGRKDG).

It belongs to the PlsY family. In terms of assembly, probably interacts with PlsX.

The protein resides in the cell inner membrane. It carries out the reaction an acyl phosphate + sn-glycerol 3-phosphate = a 1-acyl-sn-glycero-3-phosphate + phosphate. It functions in the pathway lipid metabolism; phospholipid metabolism. Catalyzes the transfer of an acyl group from acyl-phosphate (acyl-PO(4)) to glycerol-3-phosphate (G3P) to form lysophosphatidic acid (LPA). This enzyme utilizes acyl-phosphate as fatty acyl donor, but not acyl-CoA or acyl-ACP. The sequence is that of Glycerol-3-phosphate acyltransferase from Desulfovibrio desulfuricans (strain ATCC 27774 / DSM 6949 / MB).